We begin with the raw amino-acid sequence, 20 residues long: Trypsin inhibitor A chain (20 aa).

Belongs to the protease inhibitor I3 (leguminous Kunitz-type inhibitor) family. Heterodimer of an 'A' and a 'B' chain linked by a disulfide bond.

Its function is as follows. Inhibits trypsin and alpha-chymotrypsin. The sequence is that of Trypsin inhibitor A chain from Albizia julibrissin (Silk tree).